A 175-amino-acid polypeptide reads, in one-letter code: Ribosome-binding factor A (175 aa).

The interval 125 to 175 (TAKHAGEADPYKSDAPEDVDIDEDDFDEEDIDLAGDDDIDEDANKDADSSK) is disordered. The span at 128-139 (HAGEADPYKSDA) shows a compositional bias: basic and acidic residues. The span at 140–165 (PEDVDIDEDDFDEEDIDLAGDDDIDE) shows a compositional bias: acidic residues. Over residues 166 to 175 (DANKDADSSK) the composition is skewed to basic and acidic residues.

It belongs to the RbfA family. In terms of assembly, monomer. Binds 30S ribosomal subunits, but not 50S ribosomal subunits or 70S ribosomes.

The protein localises to the cytoplasm. One of several proteins that assist in the late maturation steps of the functional core of the 30S ribosomal subunit. Associates with free 30S ribosomal subunits (but not with 30S subunits that are part of 70S ribosomes or polysomes). Required for efficient processing of 16S rRNA. May interact with the 5'-terminal helix region of 16S rRNA. The protein is Ribosome-binding factor A of Pseudarthrobacter chlorophenolicus (strain ATCC 700700 / DSM 12829 / CIP 107037 / JCM 12360 / KCTC 9906 / NCIMB 13794 / A6) (Arthrobacter chlorophenolicus).